The sequence spans 203 residues: GTP cyclohydrolase-2 (203 aa).

49–53 (RIHSE) contributes to the GTP binding site. Residues C54, C65, and C67 each coordinate Zn(2+). GTP-binding positions include Q70, 92 to 94 (EGR), and T114. The active-site Proton acceptor is the D126. The active-site Nucleophile is the R128. GTP is bound by residues T149 and K154.

This sequence belongs to the GTP cyclohydrolase II family. It depends on Zn(2+) as a cofactor.

The enzyme catalyses GTP + 4 H2O = 2,5-diamino-6-hydroxy-4-(5-phosphoribosylamino)-pyrimidine + formate + 2 phosphate + 3 H(+). The protein operates within cofactor biosynthesis; riboflavin biosynthesis; 5-amino-6-(D-ribitylamino)uracil from GTP: step 1/4. Catalyzes the conversion of GTP to 2,5-diamino-6-ribosylamino-4(3H)-pyrimidinone 5'-phosphate (DARP), formate and pyrophosphate. The protein is GTP cyclohydrolase-2 of Shewanella sp. (strain ANA-3).